A 235-amino-acid polypeptide reads, in one-letter code: RAD9, HUS1, RAD1-interacting nuclear orphan protein 1 (235 aa).

Phosphoserine is present on Ser50. Residues 54-60 (SWVSPQF) carry the RAD1-binding motif motif. 3 disordered regions span residues 75 to 106 (HRDQ…SETL), 111 to 130 (RVQP…VPLF), and 149 to 198 (VFAP…LVKD). A compositionally biased stretch (polar residues) spans 96–106 (ESPQSSSSETL). Residues 123-130 (RRPLVPLF) carry the D-box motif. Basic and acidic residues predominate over residues 161–173 (SVRDDPISPDQKE). The short motif at 171 to 175 (QKENS) is the KEN box element.

As to quaternary structure, interacts (when phosphorylated by PLK1) with POLQ; promoting POLQ recruitment to DNA damage sites. Interacts with RAD1; interaction is direct and promotes association with the 9-1-1 (RAD9-RAD1-HUS1) complex. Interacts with RAD18. Interacts with TOPBP1. Interacts with UBE2N. Post-translationally, phosphorylated at Ser-50 by PLK1, promoting interaction with polymerase theta (POLQ). In terms of processing, ubiquitinated and degraded by the APC/C complex upon mitotic exit.

It localises to the nucleus. The protein resides in the chromosome. In terms of biological role, involved in microhomology-mediated end-joining (MMEJ) DNA repair by promoting recruitment of polymerase theta (POLQ) to DNA damage sites during mitosis. MMEJ is an alternative non-homologous end-joining (NHEJ) machinery that takes place during mitosis to repair double-strand breaks in DNA that originate in S-phase. Accumulates in M-phase; following phosphorylation by PLK1, interacts with POLQ, enabling its recruitment to double-strand breaks for subsequent repair. Also involved in the DNA damage response (DDR) signaling in response to genotoxic stresses such as ionizing radiation (IR) during the S phase. Recruited to sites of DNA damage through interaction with the 9-1-1 cell-cycle checkpoint response complex and TOPBP1 in a ATR-dependent manner. Required for the progression of the G1 to S phase transition. Plays a role in the stimulation of CHEK1 phosphorylation. The protein is RAD9, HUS1, RAD1-interacting nuclear orphan protein 1 (Rhno1) of Mus musculus (Mouse).